A 1791-amino-acid chain; its full sequence is Protein TIC 214 (1791 aa).

The next 6 helical transmembrane spans lie at 19 to 39, 68 to 88, 91 to 111, 133 to 153, 176 to 196, and 230 to 250; these read IINSVVVVGLYYGFLTTFSIG, FIAGQLMMFISIYYAPLHLAL, PHTITVLALPYLLFHFFWNNH, VFLNNLIFQLFNHFILPSSML, VGWLIGHILFMKWVGLVLVWI, and IFSILLFITCVYYLGRIPSPI. A compositionally biased stretch (basic and acidic residues) spans 257–271; it reads GTSETEERGGTKQDQ. Disordered stretches follow at residues 257–278 and 1498–1521; these read GTSETEERGGTKQDQEVSTEEA and ADQGELESDNEKQRNPELALPNQE.

It belongs to the TIC214 family. Part of the Tic complex.

The protein resides in the plastid. Its subcellular location is the chloroplast inner membrane. Its function is as follows. Involved in protein precursor import into chloroplasts. May be part of an intermediate translocation complex acting as a protein-conducting channel at the inner envelope. The protein is Protein TIC 214 of Aethionema grandiflorum (Persian stone-cress).